The primary structure comprises 273 residues: ATP synthase subunit a (273 aa).

5 helical membrane-spanning segments follow: residues 42-62 (TLNIDSLFFSVVLGALFLFIF), 102-122 (VIAPLALTVFVWVFLMNMMDL), 148-168 (DVSITLSMALGVFILILFYSI), 213-233 (LFGNMYAGELIFILIAGLLPW), and 244-264 (AIFHILIITLQAFIFMVLTIV).

The protein belongs to the ATPase A chain family. As to quaternary structure, F-type ATPases have 2 components, CF(1) - the catalytic core - and CF(0) - the membrane proton channel. CF(1) has five subunits: alpha(3), beta(3), gamma(1), delta(1), epsilon(1). CF(0) has three main subunits: a(1), b(2) and c(9-12). The alpha and beta chains form an alternating ring which encloses part of the gamma chain. CF(1) is attached to CF(0) by a central stalk formed by the gamma and epsilon chains, while a peripheral stalk is formed by the delta and b chains.

Its subcellular location is the cell inner membrane. Its function is as follows. Key component of the proton channel; it plays a direct role in the translocation of protons across the membrane. This chain is ATP synthase subunit a, found in Serratia proteamaculans (strain 568).